The primary structure comprises 526 residues: Probable feruloyl esterase B-1 (526 aa).

The N-terminal stretch at methionine 1–alanine 19 is a signal peptide. Intrachain disulfides connect cysteine 28–cysteine 75 and cysteine 63–cysteine 114. 4 N-linked (GlcNAc...) asparagine glycosylation sites follow: asparagine 53, asparagine 85, asparagine 98, and asparagine 138. Cystine bridges form between cysteine 187–cysteine 441, cysteine 256–cysteine 273, and cysteine 282–cysteine 291. Serine 188 serves as the catalytic Acyl-ester intermediate. Asparagine 246 carries an N-linked (GlcNAc...) asparagine glycan. Ca(2+)-binding residues include aspartate 257, aspartate 260, alanine 262, aspartate 264, and isoleucine 266. Residues asparagine 287 and asparagine 311 are each glycosylated (N-linked (GlcNAc...) asparagine). Catalysis depends on charge relay system residues aspartate 400 and histidine 440. N-linked (GlcNAc...) asparagine glycans are attached at residues asparagine 490 and asparagine 516. A disulfide bridge connects residues cysteine 503 and cysteine 525.

This sequence belongs to the tannase family.

It is found in the secreted. The catalysed reaction is feruloyl-polysaccharide + H2O = ferulate + polysaccharide.. Its function is as follows. Involved in degradation of plant cell walls. Hydrolyzes the feruloyl-arabinose ester bond in arabinoxylans as well as the feruloyl-galactose and feruloyl-arabinose ester bonds in pectin. This Aspergillus flavus (strain ATCC 200026 / FGSC A1120 / IAM 13836 / NRRL 3357 / JCM 12722 / SRRC 167) protein is Probable feruloyl esterase B-1 (faeB-1).